The following is a 288-amino-acid chain: Diaminopimelate epimerase (288 aa).

Residues Asn-14 and Asn-67 each contribute to the substrate site. The active-site Proton donor is the Cys-76. Residues 77-78, Asn-166, Asn-199, and 217-218 each bind substrate; these read GN and ER. The active-site Proton acceptor is the Cys-226. 227–228 contributes to the substrate binding site; sequence GT.

The protein belongs to the diaminopimelate epimerase family. Homodimer.

It localises to the cytoplasm. It carries out the reaction (2S,6S)-2,6-diaminopimelate = meso-2,6-diaminopimelate. It participates in amino-acid biosynthesis; L-lysine biosynthesis via DAP pathway; DL-2,6-diaminopimelate from LL-2,6-diaminopimelate: step 1/1. Functionally, catalyzes the stereoinversion of LL-2,6-diaminopimelate (L,L-DAP) to meso-diaminopimelate (meso-DAP), a precursor of L-lysine and an essential component of the bacterial peptidoglycan. The polypeptide is Diaminopimelate epimerase (Bacillus cereus (strain AH820)).